The sequence spans 211 residues: Thiamine-phosphate synthase (211 aa).

Residues 44–48 (QYRNK) and N75 contribute to the 4-amino-2-methyl-5-(diphosphooxymethyl)pyrimidine site. D76 and D95 together coordinate Mg(2+). Residue S114 coordinates 4-amino-2-methyl-5-(diphosphooxymethyl)pyrimidine. 2-[(2R,5Z)-2-carboxy-4-methylthiazol-5(2H)-ylidene]ethyl phosphate is bound at residue 140 to 142 (TKS). K143 serves as a coordination point for 4-amino-2-methyl-5-(diphosphooxymethyl)pyrimidine. G171 is a binding site for 2-[(2R,5Z)-2-carboxy-4-methylthiazol-5(2H)-ylidene]ethyl phosphate.

This sequence belongs to the thiamine-phosphate synthase family. Mg(2+) serves as cofactor.

The catalysed reaction is 2-[(2R,5Z)-2-carboxy-4-methylthiazol-5(2H)-ylidene]ethyl phosphate + 4-amino-2-methyl-5-(diphosphooxymethyl)pyrimidine + 2 H(+) = thiamine phosphate + CO2 + diphosphate. It catalyses the reaction 2-(2-carboxy-4-methylthiazol-5-yl)ethyl phosphate + 4-amino-2-methyl-5-(diphosphooxymethyl)pyrimidine + 2 H(+) = thiamine phosphate + CO2 + diphosphate. The enzyme catalyses 4-methyl-5-(2-phosphooxyethyl)-thiazole + 4-amino-2-methyl-5-(diphosphooxymethyl)pyrimidine + H(+) = thiamine phosphate + diphosphate. It participates in cofactor biosynthesis; thiamine diphosphate biosynthesis; thiamine phosphate from 4-amino-2-methyl-5-diphosphomethylpyrimidine and 4-methyl-5-(2-phosphoethyl)-thiazole: step 1/1. Functionally, condenses 4-methyl-5-(beta-hydroxyethyl)thiazole monophosphate (THZ-P) and 2-methyl-4-amino-5-hydroxymethyl pyrimidine pyrophosphate (HMP-PP) to form thiamine monophosphate (TMP). In Koribacter versatilis (strain Ellin345), this protein is Thiamine-phosphate synthase.